A 253-amino-acid polypeptide reads, in one-letter code: Proteasome subunit alpha (253 aa).

Low complexity predominate over residues 232–242 (AAGASTAGEAG). Residues 232–253 (AAGASTAGEAGSAEDEGSDDEK) form a disordered region. Residues 243 to 253 (SAEDEGSDDEK) are compositionally biased toward acidic residues.

The protein belongs to the peptidase T1A family. In terms of assembly, the 20S proteasome core is composed of 14 alpha and 14 beta subunits that assemble into four stacked heptameric rings, resulting in a barrel-shaped structure. The two inner rings, each composed of seven catalytic beta subunits, are sandwiched by two outer rings, each composed of seven alpha subunits. The catalytic chamber with the active sites is on the inside of the barrel. Has a gated structure, the ends of the cylinder being occluded by the N-termini of the alpha-subunits. Is capped by the proteasome-associated ATPase, ARC.

It is found in the cytoplasm. The protein operates within protein degradation; proteasomal Pup-dependent pathway. Its activity is regulated as follows. The formation of the proteasomal ATPase ARC-20S proteasome complex, likely via the docking of the C-termini of ARC into the intersubunit pockets in the alpha-rings, may trigger opening of the gate for substrate entry. Interconversion between the open-gate and close-gate conformations leads to a dynamic regulation of the 20S proteasome proteolysis activity. In terms of biological role, component of the proteasome core, a large protease complex with broad specificity involved in protein degradation. In Streptomyces avermitilis (strain ATCC 31267 / DSM 46492 / JCM 5070 / NBRC 14893 / NCIMB 12804 / NRRL 8165 / MA-4680), this protein is Proteasome subunit alpha.